The following is a 271-amino-acid chain: High mobility group protein homolog TDP-1 (271 aa).

Positions 8 to 63 (GPLPTDIEETVITIMREEGVRYITAKILRMRLESKYQMEFGPHKAAIDDIVARAMQ) constitute a DEK-C domain. Residues 75–118 (LKEKDASKSSGGKGSKRARSAGAEAPSKTKKEMTEKPKKPADYP) form a disordered region. Positions 101 to 116 (SKTKKEMTEKPKKPAD) are enriched in basic and acidic residues. DNA-binding regions (HMG box) lie at residues 118–186 (PKPA…DEYK) and 206–270 (PKRA…AALP).

It is found in the nucleus. Functionally, unknown. May play a role in transcription and/or DNA replication. It is not known whether this protein is DNA sequence binding-specific or not. This chain is High mobility group protein homolog TDP-1, found in Trypanosoma brucei rhodesiense.